Here is a 471-residue protein sequence, read N- to C-terminus: ATP synthase subunit beta (471 aa).

Residue 153-160 coordinates ATP; the sequence is GGAGVGKT.

The protein belongs to the ATPase alpha/beta chains family. As to quaternary structure, F-type ATPases have 2 components, CF(1) - the catalytic core - and CF(0) - the membrane proton channel. CF(1) has five subunits: alpha(3), beta(3), gamma(1), delta(1), epsilon(1). CF(0) has three main subunits: a(1), b(2) and c(9-12). The alpha and beta chains form an alternating ring which encloses part of the gamma chain. CF(1) is attached to CF(0) by a central stalk formed by the gamma and epsilon chains, while a peripheral stalk is formed by the delta and b chains.

The protein resides in the cell membrane. The enzyme catalyses ATP + H2O + 4 H(+)(in) = ADP + phosphate + 5 H(+)(out). In terms of biological role, produces ATP from ADP in the presence of a proton gradient across the membrane. The catalytic sites are hosted primarily by the beta subunits. The chain is ATP synthase subunit beta from Levilactobacillus brevis (strain ATCC 367 / BCRC 12310 / CIP 105137 / JCM 1170 / LMG 11437 / NCIMB 947 / NCTC 947) (Lactobacillus brevis).